A 250-amino-acid polypeptide reads, in one-letter code: uncharacterized protein (250 aa).

The first 19 residues, M1 to A19, serve as a signal peptide directing secretion. 2 helical membrane passes run I51 to F71 and M73 to G93. A disordered region spans residues A226–K250.

Its subcellular location is the cell membrane. This is an uncharacterized protein from Mycobacterium tuberculosis (strain CDC 1551 / Oshkosh).